Reading from the N-terminus, the 313-residue chain is Aspartate carbamoyltransferase catalytic subunit (313 aa).

The carbamoyl phosphate site is built by Arg-58 and Thr-59. Lys-86 contacts L-aspartate. Carbamoyl phosphate contacts are provided by Arg-108, His-136, and Gln-139. Residues Arg-169 and Arg-223 each coordinate L-aspartate. Gly-265 and Pro-266 together coordinate carbamoyl phosphate.

It belongs to the aspartate/ornithine carbamoyltransferase superfamily. ATCase family. As to quaternary structure, heterododecamer (2C3:3R2) of six catalytic PyrB chains organized as two trimers (C3), and six regulatory PyrI chains organized as three dimers (R2).

The enzyme catalyses carbamoyl phosphate + L-aspartate = N-carbamoyl-L-aspartate + phosphate + H(+). It participates in pyrimidine metabolism; UMP biosynthesis via de novo pathway; (S)-dihydroorotate from bicarbonate: step 2/3. In terms of biological role, catalyzes the condensation of carbamoyl phosphate and aspartate to form carbamoyl aspartate and inorganic phosphate, the committed step in the de novo pyrimidine nucleotide biosynthesis pathway. The polypeptide is Aspartate carbamoyltransferase catalytic subunit (Anaeromyxobacter sp. (strain K)).